Here is a 276-residue protein sequence, read N- to C-terminus: CASP-like protein 4A3 (276 aa).

Over residues 1–13 (MPSMSPSSISTEK) the composition is skewed to polar residues. A disordered region spans residues 1–76 (MPSMSPSSIS…PVKIEETPSP (76 aa)). Residues 1–126 (MPSMSPSSIS…RRSRREEIVK (126 aa)) are Cytoplasmic-facing. The span at 43–72 (SLDHSSDSEKEDEKRRPESRRNKNPVKIEE) shows a compositional bias: basic and acidic residues. Residues 127 to 147 (FVALGFRLSEVVLALISFSIM) traverse the membrane as a helical segment. Residues 148-167 (AADKTKGWSGDSFDRYKEYR) are Extracellular-facing. The helical transmembrane segment at 168-188 (FCLSVNVVAFIYASFQACDLA) threads the bilayer. Over 189–205 (YHLVKEKHLISHHLRPL) the chain is Cytoplasmic. Residues 206 to 226 (FEFIIDQVLAYLLMCASTAAV) traverse the membrane as a helical segment. At 227–244 (TRVDDWVSNWGKDDFTEM) the chain is on the extracellular side. Residues 245–265 (ASASIAMSFLTFLAFAFSSLI) traverse the membrane as a helical segment. Over 266-276 (SGYNLFNQDSL) the chain is Cytoplasmic.

This sequence belongs to the Casparian strip membrane proteins (CASP) family. As to quaternary structure, homodimer and heterodimers.

Its subcellular location is the cell membrane. The sequence is that of CASP-like protein 4A3 from Arabidopsis lyrata subsp. lyrata (Lyre-leaved rock-cress).